Consider the following 204-residue polypeptide: Matrix-remodeling-associated protein 7 (204 aa).

A helical transmembrane segment spans residues 7–27 (LLAALPALATALALLLAWLLV). The tract at residues 32–148 (AASPEPARAP…FSFKYSPGKL (117 aa)) is disordered. The span at 38-47 (ARAPPEPAPP) shows a compositional bias: pro residues. Low complexity predominate over residues 63 to 103 (EPAASPAGPEEPGEPAGLGELGEPAGPGEPEGPGDPAAAPA). Over residues 110-126 (VEARQEEEQDLDGEKGP) the composition is skewed to basic and acidic residues. Phosphoserine is present on S191.

It localises to the membrane. This chain is Matrix-remodeling-associated protein 7 (MXRA7), found in Homo sapiens (Human).